Consider the following 388-residue polypeptide: F-box protein At4g00893 (388 aa).

The segment at 1–30 is disordered; it reads MLPSPSVHMASPPPSLNMASHPPSPATASR. Positions 42 to 88 constitute an F-box domain; sequence NPSFADLPSSLIEEIMLLLVLKDNIRASAACKSWYEAGVSVRVVDKH.

This is F-box protein At4g00893 from Arabidopsis thaliana (Mouse-ear cress).